The primary structure comprises 358 residues: Peptide chain release factor 1 (358 aa).

Gln235 bears the N5-methylglutamine mark.

Belongs to the prokaryotic/mitochondrial release factor family. Methylated by PrmC. Methylation increases the termination efficiency of RF1.

It localises to the cytoplasm. Peptide chain release factor 1 directs the termination of translation in response to the peptide chain termination codons UAG and UAA. This chain is Peptide chain release factor 1, found in Neisseria meningitidis serogroup C (strain 053442).